The chain runs to 204 residues: Vacuolar protein-sorting-associated protein 46 (204 aa).

The interaction with VSP24 stretch occupies residues 1 to 103 (MSRNSAAGLE…ASMGQVCKGM (103 aa)). A Phosphoserine modification is found at Ser5. Coiled-coil stretches lie at residues 9-56 (LENT…RIYA) and 109-129 (NMNL…FEDL). The interaction with VSP4 stretch occupies residues 104-204 (DKALQNMNLQ…LAQRLRALRG (101 aa)). Residues 176 to 204 (NVPEIKAKEVNVDDEKEDKLAQRLRALRG) are interaction with VTA1. Positions 185–196 (VNVDDEKEDKLA) are enriched in basic and acidic residues. A disordered region spans residues 185–204 (VNVDDEKEDKLAQRLRALRG).

It belongs to the SNF7 family. As to quaternary structure, self-associates. Interacts with VPS4 and VTA1. Interacts with IST1.

Its subcellular location is the endosome membrane. The protein resides in the endomembrane system. Functionally, class E VPS protein implicated in concentration and sorting of cargo proteins of the multivesicular body (MVB) for incorporation into intralumenal vesicles. The lumenal sequestrated membrane proteins will be targeted into the vacuole after fusion of the endosome with the vacuole. Probably acts as a peripherally associated component of the ESCRT-III complex, which appears to be critical for late steps in MVB sorting, such as membrane invagination and final cargo sorting and recruits late-acting components of the sorting machinery. The MVB pathway requires the sequential function of ESCRT-O, -I,-II and -III complex assemblies. Regulates the membrane association of VPS4. Can stimulate VPS4 ATPase activity directly or via VTA1. The chain is Vacuolar protein-sorting-associated protein 46 (DID2) from Saccharomyces cerevisiae (strain ATCC 204508 / S288c) (Baker's yeast).